A 115-amino-acid polypeptide reads, in one-letter code: Non-specific lipid-transfer protein Cor a 8.0101 (115 aa).

The N-terminal stretch at 1-23 (MGSLKLVCAVLLCMMVAAPVARA) is a signal peptide. Intrachain disulfides connect Cys27/Cys74, Cys37/Cys51, Cys52/Cys97, and Cys72/Cys111.

The protein belongs to the plant LTP family. Monomer. Expressed in seed (at protein level). Expressed in seed.

Functionally, plant non-specific lipid-transfer proteins transfer phospholipids as well as galactolipids across membranes. May play a role in wax or cutin deposition in the cell walls of expanding epidermal cells and certain secretory tissues. This Corylus avellana (European hazel) protein is Non-specific lipid-transfer protein Cor a 8.0101.